Here is a 487-residue protein sequence, read N- to C-terminus: NADH-quinone oxidoreductase subunit N (487 aa).

The next 13 membrane-spanning stretches (helical) occupy residues 18–38 (LVPE…DLFV), 44–64 (VWTH…LATG), 84–104 (VMKT…WTYL), 116–136 (VLVL…SLLM), 169–189 (FVLG…VYGA), 211–231 (LLTG…AAPF), 242–262 (APAP…FGMA), 277–297 (WHLL…LMAI), 305–325 (MLAY…AGGG), 333–353 (MFYA…IIAL), 377–397 (AGLV…LGFW), 410–430 (DMLW…YYYL), and 457–477 (VLGV…PIMV).

Belongs to the complex I subunit 2 family. In terms of assembly, NDH-1 is composed of 14 different subunits. Subunits NuoA, H, J, K, L, M, N constitute the membrane sector of the complex.

The protein localises to the cell inner membrane. It catalyses the reaction a quinone + NADH + 5 H(+)(in) = a quinol + NAD(+) + 4 H(+)(out). Functionally, NDH-1 shuttles electrons from NADH, via FMN and iron-sulfur (Fe-S) centers, to quinones in the respiratory chain. The immediate electron acceptor for the enzyme in this species is believed to be ubiquinone. Couples the redox reaction to proton translocation (for every two electrons transferred, four hydrogen ions are translocated across the cytoplasmic membrane), and thus conserves the redox energy in a proton gradient. In Xanthomonas euvesicatoria pv. vesicatoria (strain 85-10) (Xanthomonas campestris pv. vesicatoria), this protein is NADH-quinone oxidoreductase subunit N.